The chain runs to 234 residues: MSFVARSLIRNVPLMGKAILSQQKQIAARLLHQTAPLAAVRVQQPAPDFKGLAVVDNSFQEVKLEDYRGKYLVLFFYPLDFTFVCPTEIVAFSERIKEFHDINTEVLGVSVDSHFSHLTWCNVDRKNGGVGQLKYPLLSDLTKKISADYDVLLDKEGISLRGTFIIDPNGILRQYSINDLPVGRSVDEVLRLIKAFQFVEQHGEVCPANWNPNSNPATIKPDVEESKKYFSKHG.

The N-terminal 30 residues, 1–30 (MSFVARSLIRNVPLMGKAILSQQKQIAARL), are a transit peptide targeting the mitochondrion. The Thioredoxin domain occupies 40-198 (VRVQQPAPDF…VLRLIKAFQF (159 aa)). Catalysis depends on Cys-85, which acts as the Cysteine sulfenic acid (-SOH) intermediate.

Belongs to the peroxiredoxin family. AhpC/Prx1 subfamily. Homodimer; disulfide-linked, upon oxidation. 6 homodimers assemble to form a ring-like dodecamer. Also exists as a monomer, however the monomeric form is present at a much lower level than the homodimeric form. In terms of tissue distribution, expressed in thoracic flight muscles (at protein level). Detected in the head and body (at protein level).

It localises to the mitochondrion. The catalysed reaction is a hydroperoxide + [thioredoxin]-dithiol = an alcohol + [thioredoxin]-disulfide + H2O. Thiol-specific peroxidase that catalyzes the reduction of hydrogen peroxide and organic hydroperoxides to water and alcohols, respectively. Plays a role in cell protection against oxidative stress by detoxifying peroxides. May be involved in aging-associated changes in the responsiveness to oxidative stress. Involved in the maintenance of global thiol redox homeostasis. Functions in the central nervous system (CNS) and in motor neurons and is essential for normal motor function. The polypeptide is Thioredoxin-dependent peroxide reductase, mitochondrial (Drosophila melanogaster (Fruit fly)).